We begin with the raw amino-acid sequence, 328 residues long: Arabinose 5-phosphate isomerase KdsD (328 aa).

Residues alanine 41–phenylalanine 184 enclose the SIS domain. Substrate contacts are provided by residues glycine 75 to threonine 76, histidine 82, histidine 88, threonine 114 to lysine 123, and asparagine 148 to proline 150. Histidine 82 is a Zn(2+) binding site. One can recognise a CBS 1 domain in the interval methionine 210 to leucine 268. Residue aspartate 275 participates in substrate binding. Positions methionine 277–valine 328 constitute a CBS 2 domain.

This sequence belongs to the SIS family. GutQ/KpsF subfamily. As to quaternary structure, homotetramer.

The enzyme catalyses D-arabinose 5-phosphate = D-ribulose 5-phosphate. It participates in carbohydrate biosynthesis; 3-deoxy-D-manno-octulosonate biosynthesis; 3-deoxy-D-manno-octulosonate from D-ribulose 5-phosphate: step 1/3. Its pathway is bacterial outer membrane biogenesis; lipopolysaccharide biosynthesis. In terms of biological role, involved in the biosynthesis of 3-deoxy-D-manno-octulosonate (KDO), a unique 8-carbon sugar component of lipopolysaccharides (LPSs). Catalyzes the reversible aldol-ketol isomerization between D-ribulose 5-phosphate (Ru5P) and D-arabinose 5-phosphate (A5P). This chain is Arabinose 5-phosphate isomerase KdsD (kdsD), found in Yersinia pestis.